Here is a 173-residue protein sequence, read N- to C-terminus: Microfibrillar-associated protein 5 (173 aa).

Residues 1-21 (MSLLGPKVLLFLAAFIITSDW) form the signal peptide. Residues 30 to 32 (RGD) carry the Cell attachment site motif. An O-linked (GalNAc...) threonine glycan is attached at T54. N79 carries an N-linked (GlcNAc...) asparagine glycan.

The protein belongs to the MFAP family. Interacts with TGFB2. Interacts with BMP2. Interacts with FBN1 (via N-terminal domain) and FBN2. Forms intermolecular disulfide bonds either with other MAGP-2 molecules or with other components of the microfibrils. In terms of processing, N- and O-glycosylated. O-glycosylated with core 1 or possibly core 8 glycans. O-glycan heterogeneity at Thr-54: HexHexNAc (major) and HexHexNAc + sulfate (minor).

It is found in the secreted. It localises to the extracellular space. Its subcellular location is the extracellular matrix. Its function is as follows. May play a role in hematopoiesis. In the cardiovascular system, could regulate growth factors or participate in cell signaling in maintaining large vessel integrity. Component of the elastin-associated microfibrils. The sequence is that of Microfibrillar-associated protein 5 (MFAP5) from Homo sapiens (Human).